A 131-amino-acid chain; its full sequence is Large-conductance mechanosensitive channel (131 aa).

The next 2 helical transmembrane spans lie at 14 to 34 (VIDL…VTSL) and 67 to 87 (GSFI…FIFI).

The protein belongs to the MscL family. As to quaternary structure, homopentamer.

Its subcellular location is the cell membrane. Its function is as follows. Channel that opens in response to stretch forces in the membrane lipid bilayer. May participate in the regulation of osmotic pressure changes within the cell. This Bacillus pumilus (strain SAFR-032) protein is Large-conductance mechanosensitive channel.